The sequence spans 430 residues: Trigger factor (430 aa).

The PPIase FKBP-type domain maps to 163–248; the sequence is GNIAIIDFKG…IKDIKVKELP (86 aa).

It belongs to the FKBP-type PPIase family. Tig subfamily.

Its subcellular location is the cytoplasm. The catalysed reaction is [protein]-peptidylproline (omega=180) = [protein]-peptidylproline (omega=0). Involved in protein export. Acts as a chaperone by maintaining the newly synthesized protein in an open conformation. Functions as a peptidyl-prolyl cis-trans isomerase. The protein is Trigger factor of Clostridium botulinum (strain Okra / Type B1).